Consider the following 691-residue polypeptide: Methionine--tRNA ligase (691 aa).

The 'HIGH' region motif lies at 15-25 (PYTNGPIHIGH). Residues C147, C150, C160, and C163 each contribute to the Zn(2+) site. The 'KMSKS' region signature appears at 336–340 (KLSTS). T339 is an ATP binding site. In terms of domain architecture, tRNA-binding spans 589 to 691 (DFTKMDLRVG…DGVKAGTTIN (103 aa)).

It belongs to the class-I aminoacyl-tRNA synthetase family. MetG type 1 subfamily. As to quaternary structure, homodimer. It depends on Zn(2+) as a cofactor.

The protein resides in the cytoplasm. It carries out the reaction tRNA(Met) + L-methionine + ATP = L-methionyl-tRNA(Met) + AMP + diphosphate. Functionally, is required not only for elongation of protein synthesis but also for the initiation of all mRNA translation through initiator tRNA(fMet) aminoacylation. The sequence is that of Methionine--tRNA ligase from Christiangramia forsetii (strain DSM 17595 / CGMCC 1.15422 / KT0803) (Gramella forsetii).